A 340-amino-acid chain; its full sequence is GATA transcription factor 20 (340 aa).

The segment at 1 to 88 is disordered; the sequence is MSHHDGSKPY…MEEDEDAQHH (88 aa). Residues 25 to 47 show a composition bias toward low complexity; sequence ADDAAAHVAPTVDHLAAVAAEAE. Basic and acidic residues predominate over residues 48–60; it reads AMARFEEEHRALG. A compositionally biased stretch (acidic residues) spans 61-84; that stretch reads AEEEYEEEEDELEEEEEEMEEDED. Positions 121–156 constitute a Tify domain; that stretch reads QPMASNQLTLSFQGEVYVFDSVSPDKVQAVLLLLGG. A CCT domain is found at 182–224; sequence RVASLMRFREKRKERNFDKKIRYSVRKEVALRMQRNRGQFTSS. A disordered region spans residues 215–253; that stretch reads QRNRGQFTSSKPKGDEATSELTASDGSPNWGSVEGRPPS. Residues 233–244 show a composition bias toward polar residues; sequence SELTASDGSPNW. Residues 257–284 form a GATA-type zinc finger; that stretch reads CHHCGINAKATPMMRRGPDGPRTLCNAC. Positions 313–325 are enriched in polar residues; that stretch reads DGNGSAAAPTTEQ. Residues 313 to 340 are disordered; that stretch reads DGNGSAAAPTTEQEIPAPATVNGHESST.

This sequence belongs to the type IV zinc-finger family. Class C subfamily.

It is found in the nucleus. In terms of biological role, transcriptional activator that specifically binds 5'-GATA-3' or 5'-GAT-3' motifs within gene promoters. This is GATA transcription factor 20 from Oryza sativa subsp. japonica (Rice).